The primary structure comprises 433 residues: MENELEHLNWNIKHALLQLEGPLAQELDSCLEVSPGALSPSNSVYQKILDTVQVLDKLLVTLTPPHMTLVDGVFAFTNSKVLLCASEYALADHVQKLQPCSISQLAEATGLHEQGLFQIVRYLREMGYFSQDPKTGLLSNNRLSNLLRKDHWATWINWVDFFPREYYDLLSRLPDQLRSDQPKTATELFYNTDKPIYQYLAETGRAAGFHKVTGTGSVVEAPGLLADYPWEEVKSETVVDVGAGVGDFIRSYLEKFPDATAAAFELPSTAEILKQRFPDDDPLTSRIVSITGGDFFQDPIPESSVYLLRWILHNWGDEDCIKLLRRIRETMVIKPGVSRVLIIESVLFDGRLGRGARYADIRMLARCRNKERTLGEYRKLAEEAGWRLNRVVSPRGCLTQIMELRPVGACTGSPRANGNGNSAGGLEWESELM.

Residues Glu265 and Gly293–Phe295 contribute to the S-adenosyl-L-methionine site. The active-site Proton acceptor is His313. Residues Ser413–Met433 form a disordered region.

Belongs to the class I-like SAM-binding methyltransferase superfamily. Cation-independent O-methyltransferase family. COMT subfamily.

It functions in the pathway secondary metabolite biosynthesis. Its function is as follows. O-methyltransferase; part of the gene cluster that mediates the biosynthesis of hexadehydro-astechrome (HAS), a tryptophan-derived iron(III)-complex that acts as a virulence factor in infected mice. Within the pathway, hasC, with the cytochrome P450 monooxygenase hasH and the FAD-linked oxidoreductase hasG, convert the hasE-prenylated Trp-Ala-dipeptide into an O-methylated diketopiperazine that is then released from the hasD NRPS. The HAS biosynthesis begins with the synthesis of a tethered Trp-Ala dipeptide by the NRPS hasD. The 7-dimethylallyltryptophan synthase hasE then catalyzes the prenylation of the hasD-tethered tryptophan or the resulting tethered Trp-Ala dipeptide at the C-7 position of the indole moiety. HAS biosynthesis continues via tethered intermediates with the succesive actions of the cytochrome P450 monooxygenase hasH, the O-methyltransferase hasC, and the FAD-linked oxidoreductase hasG. The resulting O-methylated diketopiperazine is then released from hasD. Finally, three O-methylated diketopiperazine molecules assemble in a trimeric complex with Fe(III) to produce hexadehydro-astechrome. This is O-methyltransferase hasC from Aspergillus fumigatus (strain CBS 144.89 / FGSC A1163 / CEA10) (Neosartorya fumigata).